A 185-amino-acid polypeptide reads, in one-letter code: MTTLSIFHQNQPEQAQTVVTDPDTIRNKLSAHGVHFDRWATRDLPADATQEEILEAYADEVARLKQDWGFQTADVVSLTADHPQKDAFRQKFLDEHTHSEDEVRFFVRGQGLFYLHFGDQVYALLCEKNDLISVPDGTRHWFDMGPEPEFTCIRLFSNPEGWVASFTGEDIASRLPRYESLAGGA.

Residues His96, His98, Glu102, and His140 each contribute to the Fe(2+) site. Positions 96, 98, 102, and 140 each coordinate Ni(2+).

Belongs to the acireductone dioxygenase (ARD) family. As to quaternary structure, monomer. Fe(2+) is required as a cofactor. Ni(2+) serves as cofactor.

It catalyses the reaction 1,2-dihydroxy-5-(methylsulfanyl)pent-1-en-3-one + O2 = 3-(methylsulfanyl)propanoate + CO + formate + 2 H(+). It carries out the reaction 1,2-dihydroxy-5-(methylsulfanyl)pent-1-en-3-one + O2 = 4-methylsulfanyl-2-oxobutanoate + formate + 2 H(+). It participates in amino-acid biosynthesis; L-methionine biosynthesis via salvage pathway; L-methionine from S-methyl-5-thio-alpha-D-ribose 1-phosphate: step 5/6. In terms of biological role, catalyzes 2 different reactions between oxygen and the acireductone 1,2-dihydroxy-3-keto-5-methylthiopentene (DHK-MTPene) depending upon the metal bound in the active site. Fe-containing acireductone dioxygenase (Fe-ARD) produces formate and 2-keto-4-methylthiobutyrate (KMTB), the alpha-ketoacid precursor of methionine in the methionine recycle pathway. Ni-containing acireductone dioxygenase (Ni-ARD) produces methylthiopropionate, carbon monoxide and formate, and does not lie on the methionine recycle pathway. In Marinobacter nauticus (strain ATCC 700491 / DSM 11845 / VT8) (Marinobacter aquaeolei), this protein is Acireductone dioxygenase.